Consider the following 313-residue polypeptide: Ribosomal RNA small subunit methyltransferase H (313 aa).

Residues 35 to 37, D55, F79, D100, and Q107 each bind S-adenosyl-L-methionine; that span reads GGH.

Belongs to the methyltransferase superfamily. RsmH family.

Its subcellular location is the cytoplasm. It catalyses the reaction cytidine(1402) in 16S rRNA + S-adenosyl-L-methionine = N(4)-methylcytidine(1402) in 16S rRNA + S-adenosyl-L-homocysteine + H(+). In terms of biological role, specifically methylates the N4 position of cytidine in position 1402 (C1402) of 16S rRNA. The protein is Ribosomal RNA small subunit methyltransferase H of Burkholderia orbicola (strain AU 1054).